We begin with the raw amino-acid sequence, 264 residues long: 3-methyl-2-oxobutanoate hydroxymethyltransferase (264 aa).

Asp-45 and Asp-84 together coordinate Mg(2+). Residues 45 to 46 (DS), Asp-84, and Lys-112 contribute to the 3-methyl-2-oxobutanoate site. Glu-114 serves as a coordination point for Mg(2+). Residue Glu-181 is the Proton acceptor of the active site.

This sequence belongs to the PanB family. In terms of assembly, homodecamer; pentamer of dimers. Requires Mg(2+) as cofactor.

Its subcellular location is the cytoplasm. It carries out the reaction 3-methyl-2-oxobutanoate + (6R)-5,10-methylene-5,6,7,8-tetrahydrofolate + H2O = 2-dehydropantoate + (6S)-5,6,7,8-tetrahydrofolate. Its pathway is cofactor biosynthesis; (R)-pantothenate biosynthesis; (R)-pantoate from 3-methyl-2-oxobutanoate: step 1/2. Functionally, catalyzes the reversible reaction in which hydroxymethyl group from 5,10-methylenetetrahydrofolate is transferred onto alpha-ketoisovalerate to form ketopantoate. This chain is 3-methyl-2-oxobutanoate hydroxymethyltransferase, found in Escherichia coli O1:K1 / APEC.